Consider the following 371-residue polypeptide: Liposome tubulation protein MamY (371 aa).

Over 1 to 18 (MLMNFVNNVSKTINGGAR) the chain is Cytoplasmic. A helical transmembrane segment spans residues 19–39 (IVYVGSFSWAVLSLLFVTAFS). Residues 40-51 (GWNNIFSMLPHE) are Lumenal-facing. A helical transmembrane segment spans residues 52–72 (IFILVLTISLPIALIVLIFML). Residues 73 to 371 (SQIVRTVESV…LIDGTPISDA (299 aa)) lie on the Cytoplasmic side of the membrane.

It belongs to the magnetosome MamY family. Probably interacts with MamX and MamZ proteins.

The protein localises to the magnetosome membrane. Functionally, may be involved in constriction of the cell inner membrane to form mature magnetosomes. Binds cardiolipin and liposomes. May function with MamX, MamZ amd Mms6 in biomineralization. This is Liposome tubulation protein MamY from Magnetospirillum gryphiswaldense (strain DSM 6361 / JCM 21280 / NBRC 15271 / MSR-1).